The sequence spans 148 residues: uncharacterized protein (148 aa).

Residues 1–23 (MKALVAVSAVAVVALLGVSSAQA) form the signal peptide. Residues 22–45 (QADPEADPGAGEANYGGPPSSPRL) form a disordered region.

To M.leprae ML2452.

This is an uncharacterized protein from Mycobacterium bovis (strain ATCC BAA-935 / AF2122/97).